We begin with the raw amino-acid sequence, 143 residues long: Large ribosomal subunit protein uL13 (143 aa).

This sequence belongs to the universal ribosomal protein uL13 family. In terms of assembly, part of the 50S ribosomal subunit.

Functionally, this protein is one of the early assembly proteins of the 50S ribosomal subunit, although it is not seen to bind rRNA by itself. It is important during the early stages of 50S assembly. The polypeptide is Large ribosomal subunit protein uL13 (Solibacter usitatus (strain Ellin6076)).